The sequence spans 417 residues: Gamma-glutamyl phosphate reductase (417 aa).

It belongs to the gamma-glutamyl phosphate reductase family.

It is found in the cytoplasm. It carries out the reaction L-glutamate 5-semialdehyde + phosphate + NADP(+) = L-glutamyl 5-phosphate + NADPH + H(+). It functions in the pathway amino-acid biosynthesis; L-proline biosynthesis; L-glutamate 5-semialdehyde from L-glutamate: step 2/2. In terms of biological role, catalyzes the NADPH-dependent reduction of L-glutamate 5-phosphate into L-glutamate 5-semialdehyde and phosphate. The product spontaneously undergoes cyclization to form 1-pyrroline-5-carboxylate. This is Gamma-glutamyl phosphate reductase from Escherichia coli O127:H6 (strain E2348/69 / EPEC).